The following is a 368-amino-acid chain: mRNA export factor (368 aa).

The segment at 15–34 (TSMFGSTTTDNHNPMKDIEV) is disordered. 7 WD repeats span residues 37–79 (SPDD…QTIP), 84–114 (MHTG…KMWD), 125–157 (QHDA…KFWD), 168–206 (QLPE…EFRR), 215–255 (HRCV…KDNF), 271–301 (QDIY…SFWD), and 310–346 (TSEQ…EFYN). The residue at position 229 (Thr-229) is a Phosphothreonine.

This sequence belongs to the WD repeat rae1 family. Interacts with NUMA1 (via N-terminal end of the coiled-coil domain); this interaction promotes spindle formation in mitosis. Interacts with NUP98. Interacts with MYCBP2. Interacts with USP11.

The protein resides in the cytoplasm. It is found in the nucleus. It localises to the cytoskeleton. Its subcellular location is the spindle pole. Its function is as follows. Plays a role in mitotic bipolar spindle formation. Binds mRNA. May function in nucleocytoplasmic transport and in directly or indirectly attaching cytoplasmic mRNPs to the cytoskeleton. This chain is mRNA export factor (RAE1), found in Bos taurus (Bovine).